The sequence spans 98 residues: NADH-ubiquinone oxidoreductase chain 4L (98 aa).

A run of 3 helical transmembrane segments spans residues 2 to 22 (LSIS…MLMF), 29 to 49 (SLLC…LIIL), and 61 to 81 (ILLL…LVMV).

Belongs to the complex I subunit 4L family. As to quaternary structure, core subunit of respiratory chain NADH dehydrogenase (Complex I) which is composed of 45 different subunits.

It is found in the mitochondrion inner membrane. The catalysed reaction is a ubiquinone + NADH + 5 H(+)(in) = a ubiquinol + NAD(+) + 4 H(+)(out). In terms of biological role, core subunit of the mitochondrial membrane respiratory chain NADH dehydrogenase (Complex I) which catalyzes electron transfer from NADH through the respiratory chain, using ubiquinone as an electron acceptor. Part of the enzyme membrane arm which is embedded in the lipid bilayer and involved in proton translocation. This chain is NADH-ubiquinone oxidoreductase chain 4L (MT-ND4L), found in Microcebus ravelobensis (Golden-brown mouse lemur).